The following is a 358-amino-acid chain: Uroporphyrinogen decarboxylase (358 aa).

Residues 29-33 (RQAGR), F48, D79, Y155, S210, and H330 each bind substrate.

The protein belongs to the uroporphyrinogen decarboxylase family. In terms of assembly, homodimer.

It localises to the cytoplasm. The catalysed reaction is uroporphyrinogen III + 4 H(+) = coproporphyrinogen III + 4 CO2. The protein operates within porphyrin-containing compound metabolism; protoporphyrin-IX biosynthesis; coproporphyrinogen-III from 5-aminolevulinate: step 4/4. Its function is as follows. Catalyzes the decarboxylation of four acetate groups of uroporphyrinogen-III to yield coproporphyrinogen-III. The sequence is that of Uroporphyrinogen decarboxylase from Bordetella parapertussis (strain 12822 / ATCC BAA-587 / NCTC 13253).